The sequence spans 347 residues: Probable dual-specificity RNA methyltransferase RlmN (347 aa).

Residue Glu93 is the Proton acceptor of the active site. The 235-residue stretch at 99–333 (TEKRLTACLS…VSLRKSRGLD (235 aa)) folds into the Radical SAM core domain. A disulfide bond links Cys106 and Cys338. Residues Cys113, Cys117, and Cys120 each contribute to the [4Fe-4S] cluster site. S-adenosyl-L-methionine is bound by residues 160–161 (GE), Ser190, 219–221 (SLH), and Asn295. Cys338 functions as the S-methylcysteine intermediate in the catalytic mechanism.

It belongs to the radical SAM superfamily. RlmN family. Requires [4Fe-4S] cluster as cofactor.

It localises to the cytoplasm. The enzyme catalyses adenosine(2503) in 23S rRNA + 2 reduced [2Fe-2S]-[ferredoxin] + 2 S-adenosyl-L-methionine = 2-methyladenosine(2503) in 23S rRNA + 5'-deoxyadenosine + L-methionine + 2 oxidized [2Fe-2S]-[ferredoxin] + S-adenosyl-L-homocysteine. The catalysed reaction is adenosine(37) in tRNA + 2 reduced [2Fe-2S]-[ferredoxin] + 2 S-adenosyl-L-methionine = 2-methyladenosine(37) in tRNA + 5'-deoxyadenosine + L-methionine + 2 oxidized [2Fe-2S]-[ferredoxin] + S-adenosyl-L-homocysteine. Specifically methylates position 2 of adenine 2503 in 23S rRNA and position 2 of adenine 37 in tRNAs. This is Probable dual-specificity RNA methyltransferase RlmN from Prochlorococcus marinus (strain MIT 9301).